We begin with the raw amino-acid sequence, 233 residues long: Large ribosomal subunit protein uL1 (233 aa).

This sequence belongs to the universal ribosomal protein uL1 family. Part of the 50S ribosomal subunit.

Binds directly to 23S rRNA. The L1 stalk is quite mobile in the ribosome, and is involved in E site tRNA release. In terms of biological role, protein L1 is also a translational repressor protein, it controls the translation of the L11 operon by binding to its mRNA. In Proteus mirabilis (strain HI4320), this protein is Large ribosomal subunit protein uL1.